Consider the following 189-residue polypeptide: Ribosome maturation factor RimM (189 aa).

Polar residues predominate over residues 1 to 16 (MAPSCPTRSRVWSSRT). A disordered region spans residues 1 to 21 (MAPSCPTRSRVWSSRTSPPPD). In terms of domain architecture, PRC barrel spans 118–189 (ENEFYWSDLI…TVEVDWGEDY (72 aa)).

This sequence belongs to the RimM family. As to quaternary structure, binds ribosomal protein uS19.

Its subcellular location is the cytoplasm. In terms of biological role, an accessory protein needed during the final step in the assembly of 30S ribosomal subunit, possibly for assembly of the head region. Essential for efficient processing of 16S rRNA. May be needed both before and after RbfA during the maturation of 16S rRNA. It has affinity for free ribosomal 30S subunits but not for 70S ribosomes. This chain is Ribosome maturation factor RimM, found in Thiobacillus denitrificans (strain ATCC 25259 / T1).